Reading from the N-terminus, the 49-residue chain is Large ribosomal subunit protein bL33C (49 aa).

Positions 21 to 49 (KNKRNNPDRVEFKKYCPRDKKSTLHRETK) are disordered. The segment covering 25-49 (NNPDRVEFKKYCPRDKKSTLHRETK) has biased composition (basic and acidic residues).

It belongs to the bacterial ribosomal protein bL33 family.

This is Large ribosomal subunit protein bL33C from Bacillus licheniformis (strain ATCC 14580 / DSM 13 / JCM 2505 / CCUG 7422 / NBRC 12200 / NCIMB 9375 / NCTC 10341 / NRRL NRS-1264 / Gibson 46).